Here is a 381-residue protein sequence, read N- to C-terminus: E3 ubiquitin-protein ligase RNF133 (381 aa).

One can recognise a PA domain in the interval 65-167; that stretch reads SSILKRVAGV…VKGMEILHLI (103 aa). A helical transmembrane segment spans residues 186-208; sequence WLNHYFVSFMIVTTATLAYFTFY. The RING-type; atypical zinc finger occupies 256-297; it reads CVICFEAYKPNEIVRILTCKHFFHKNCIDPWILAHGTCPMCK. The tract at residues 340–381 is disordered; it reads LPPARTSSKVTHVQEHPTSVNVGSQPPEAEETGHPSFGQHDL. Over residues 344–363 the composition is skewed to polar residues; that stretch reads RTSSKVTHVQEHPTSVNVGS.

As to quaternary structure, interacts with E3 ligase UBE2J1. In terms of processing, auto-ubiquitinated.

The protein resides in the endoplasmic reticulum membrane. The enzyme catalyses S-ubiquitinyl-[E2 ubiquitin-conjugating enzyme]-L-cysteine + [acceptor protein]-L-lysine = [E2 ubiquitin-conjugating enzyme]-L-cysteine + N(6)-ubiquitinyl-[acceptor protein]-L-lysine.. It functions in the pathway protein modification; protein ubiquitination. Functionally, has E3 ubiquitin-protein ligase activity. Plays a role in male fecundity through the interaction with the E2 ubituitin-protein ligase UBE2J1. The polypeptide is E3 ubiquitin-protein ligase RNF133 (Rnf133) (Rattus norvegicus (Rat)).